We begin with the raw amino-acid sequence, 235 residues long: Large ribosomal subunit protein uL1 (235 aa).

It belongs to the universal ribosomal protein uL1 family. In terms of assembly, part of the 50S ribosomal subunit.

Functionally, binds directly to 23S rRNA. The L1 stalk is quite mobile in the ribosome, and is involved in E site tRNA release. In terms of biological role, protein L1 is also a translational repressor protein, it controls the translation of the L11 operon by binding to its mRNA. This is Large ribosomal subunit protein uL1 from Parasynechococcus marenigrum (strain WH8102).